The following is a 339-amino-acid chain: WAT1-related protein At5g40210 (339 aa).

Transmembrane regions (helical) follow at residues 11–31, 42–62, 74–94, 104–124, 140–160, 168–188, 200–220, 233–253, 266–286, and 289–309; these read GWIL…NTLV, FVVL…LTFF, FSIL…QILG, TLSS…AVVF, VLGT…HGPM, WIIG…SYLV, VVVT…VSLL, FDIT…YYVI, LSMF…IFLG, and LYLG…MVLW. The EamA domain maps to 29 to 154; it reads TLVKAATSKG…LSIIGALVVT (126 aa).

It belongs to the drug/metabolite transporter (DMT) superfamily. Plant drug/metabolite exporter (P-DME) (TC 2.A.7.4) family.

It localises to the membrane. The sequence is that of WAT1-related protein At5g40210 from Arabidopsis thaliana (Mouse-ear cress).